A 534-amino-acid polypeptide reads, in one-letter code: MAAARVEYIAPWWVYWLHNFPHVDLSLRQKSPDFNPKDPGYQQTLLFVALIVALCAAVNLLFVSVYLICLCCCKKEDETETKKTSSCCVTWTAAVSGLLCCAAVGIGFYGNSETNDGVYQLTYSLDNANHTLAGIDSLVSNTNFKMKEDLDKHLFRLNEIFAARGDYVQSLRFMQQMAGNIIQQLTSLPNWQGTSVNLSDIARQTSTIEYYRWLSYLLLFISYVVICLVTCVGLAKKSKCLLLIMLCFGLIALMLSWTSLALETSSAMGTSDFCVAPDKFIMNMTHDQITTEVVHYYLYCSQSLRNPFQQALTVFQRSLTTMQIQVQGLLQFAVPLFPTAQKDLLGIQLLLNTSESNLHQITALLDCRGLHKDYLEALIGICYDGVEGMLYLGLFSLLAALAFTAMVCAMPQAWKHLEARDRDYNDIDDEDPFNPQARRIAAHNPNRGQLRSFCSYSSSMGSQASLQPPAPTVSNAPVAEYMNQAALFGGNPRYENVPLIGRGSPPPTYSPTMRATYLSMTEEPSSIYSNVFPA.

The Extracellular segment spans residues methionine 1 to threonine 44. Residues leucine 45 to valine 65 form a helical membrane-spanning segment. At tyrosine 66–cysteine 87 the chain is on the cytoplasmic side. The chain crosses the membrane as a helical span at residues cysteine 88–phenylalanine 108. At tyrosine 109–tryptophan 213 the chain is on the extracellular side. Residues glutamate 113 and aspartate 116 each contribute to the Ca(2+) site. Asparagine 129 carries an N-linked (GlcNAc...) asparagine glycan. The short motif at arginine 164–aspartate 166 is the RGD element. N-linked (GlcNAc...) asparagine glycosylation occurs at asparagine 197. A helical membrane pass occupies residues leucine 214–leucine 234. At alanine 235–cysteine 240 the chain is on the cytoplasmic side. Residues leucine 241 to alanine 261 form a helical membrane-spanning segment. At leucine 262–glycine 388 the chain is on the extracellular side. Disulfide bonds link cysteine 274-cysteine 382 and cysteine 300-cysteine 367. 2 N-linked (GlcNAc...) asparagine glycosylation sites follow: asparagine 283 and asparagine 352. The helical transmembrane segment at methionine 389–alanine 409 threads the bilayer. Topologically, residues methionine 410–alanine 534 are cytoplasmic.

The protein belongs to the tweety family. In terms of assembly, forms cis-homodimers in the presence of Ca(+2) and forms monomers and trans-dimers in the absence of Ca(2+).

Its subcellular location is the cell membrane. It catalyses the reaction chloride(in) = chloride(out). It carries out the reaction L-glutamate(out) = L-glutamate(in). May act as a calcium-independent, swelling-dependent volume-regulated anion channel (VRAC-swell) which plays a pivotal role in the process of regulatory volume decrease (RVD) in the brain through the efflux of anions like chloride and organic osmolytes like glutamate. Probable large-conductance Ca(2+)-activated chloride channel. This chain is Protein tweety homolog 2 (ttyh2), found in Xenopus tropicalis (Western clawed frog).